We begin with the raw amino-acid sequence, 175 residues long: Cytochrome c homolog (175 aa).

The Cytoplasmic segment spans residues 1 to 8 (MTGKELNK). Residues 9–29 (IVAAILFASLIAMIVRFVANI) form a helical; Signal-anchor membrane-spanning segment. Over 30–175 (LYKPNLQVLN…LFLKNYVHDK (146 aa)) the chain is Periplasmic. Heme c-binding residues include Cys-84, Cys-87, His-88, and Met-150.

Belongs to the cytochrome c family. Binds 1 heme c group covalently per subunit.

It localises to the cell membrane. In terms of biological role, may be involved in electron transfer from bc1 complex to aa3. This chain is Cytochrome c homolog (cycM), found in Rickettsia typhi (strain ATCC VR-144 / Wilmington).